The sequence spans 904 residues: Putative pentatricopeptide repeat-containing protein At1g19290 (904 aa).

PPR repeat units follow at residues 154–188 (SPTV…GRIP), 189–223 (SLLS…EVSP), 224–254 (DVFT…TESS), 260–294 (NVVT…GVSR), 295–329 (NVVT…KLVA), 330–364 (DQHM…GVRT), 365–399 (NTTI…SLKP), 400–434 (DHHT…EVVP), 435–469 (TVMT…GVNA), 470–504 (DEIS…GLLT), 505–539 (DTIT…RCKP), 540–574 (AVQT…GIFP), 575–609 (TIEM…GLTP), 610–644 (TVAT…GITL), 645–679 (NVNI…DLLL), 718–753 (NNIV…RFIP), 754–788 (DEYT…GIIP), 789–823 (NIVT…GITP), and 824–858 (NAIT…GLVR).

It belongs to the PPR family. P subfamily.

This chain is Putative pentatricopeptide repeat-containing protein At1g19290, found in Arabidopsis thaliana (Mouse-ear cress).